A 144-amino-acid polypeptide reads, in one-letter code: Cell division protein SepF (144 aa).

This sequence belongs to the SepF family. Homodimer. Interacts with FtsZ.

The protein localises to the cytoplasm. Its function is as follows. Cell division protein that is part of the divisome complex and is recruited early to the Z-ring. Probably stimulates Z-ring formation, perhaps through the cross-linking of FtsZ protofilaments. Its function overlaps with FtsA. The chain is Cell division protein SepF from Geobacillus sp. (strain WCH70).